Reading from the N-terminus, the 444-residue chain is Protein CPn_0808/CP_1063/CPj0808/CpB0837 (444 aa).

The span at 1 to 13 (MTSGVSGSSSQDP) shows a compositional bias: polar residues. The tract at residues 1–124 (MTSGVSGSSS…NNYDSPSLPT (124 aa)) is disordered. Over residues 15-24 (LAAQLAQSSQ) the composition is skewed to low complexity. Residues 25–42 (KAGNAQSGHDTKNVTKQG) are compositionally biased toward polar residues. The segment covering 77–86 (SKGEKSEKSG) has biased composition (basic and acidic residues). Low complexity predominate over residues 88–103 (SKSSTSVASASETATA). Residues 113–124 (RQNNYDSPSLPT) show a composition bias toward polar residues.

This sequence belongs to the chlamydial CPn_0808/CT_579/TC_0868 family.

The sequence is that of Protein CPn_0808/CP_1063/CPj0808/CpB0837 from Chlamydia pneumoniae (Chlamydophila pneumoniae).